Reading from the N-terminus, the 630-residue chain is Cytochrome B pre-mRNA-processing protein 2 (630 aa).

The protein localises to the mitochondrion. Its function is as follows. Appears to be specifically required for the splicing of the terminal intron (bI5) of the cytochrome b pre-mRNA. Can also stimulates the splicing of the omega intron of the precursor of large ribosomal RNA. The polypeptide is Cytochrome B pre-mRNA-processing protein 2 (CBP2) (Saccharomyces cerevisiae (strain ATCC 204508 / S288c) (Baker's yeast)).